The sequence spans 439 residues: DNA 3'-5' translocase XPB2 (439 aa).

The tract at residues 1–54 (MVYLRYFKGLILSDAYAPGLKWSDELKAYSALAFKYRDVRKYFLEKEIEVEENV) is DRD domain. The region spanning 77-221 (VKAWLKEKRG…LYPILVGPIV (145 aa)) is the Helicase ATP-binding domain. ATP-binding positions include 90 to 97 (LPTGAGKT) and arginine 127. The DEAH box motif lies at 174–177 (DEVH). An RED motif motif is present at residues 205–207 (RDD). The segment at 227-234 (EELAGKYI) is flexible hinge region. Residues 248–307 (NEEKKRYDGLRKKLKDFLSSRGLKLQNLDDFHRLVKLAAKDKEAREALLAWHESLNIAVN) are thM region. The region spanning 311 to 439 (KIEKLREILQ…DYRLSRRRRE (129 aa)) is the Helicase C-terminal domain.

This sequence belongs to the helicase family. RAD25/XPB subfamily. Forms a heterodimer with Bax1.

It carries out the reaction Couples ATP hydrolysis with the unwinding of duplex DNA by translocating in the 3'-5' direction.. The catalysed reaction is ATP + H2O = ADP + phosphate + H(+). Its function is as follows. ATP-dependent DNA translocase which moves along double-stranded DNA (dsDNA) in a 3'-5' direction, unwinding the DNA. The ThM domain grips the resulting 3'-ssDNA tail and functions as a wedge (particularly Phe-278), breaking dsDNA base pairs, probably using the energy from ATP hydrolysis to move along dsDNA. A DNA-dependent ATPase; double-stranded DNA (dsDNA) stimulates the activity more than single-stranded DNA (ssDNA), while Bax1 stimulates ATPase more. In an in vitro assay had no detectable helicase activity. Binds ssDNA better than dsDNA. Has very low ATPase activity that is stimulated by Bax1; dsDNA, Y-form DNA and a DNA substrate with a 6 base pair (bp) bubble in the center stimulate the XPB2-Bax1 ATPase activity about 10- 20-fold more than the absence of DNA. In an XPB2-Bax1-bubble DNA crystal (12 bp of dsDNA, a 6 base bubble and 6 bp of dsDNA) the short 6 bp arm is unwound. The 2 helicase and the ThM domains of XPB2 with the NTD and CRD domains of Bax1 encircle the DNA, forming a tunnel where the 12 bp dsDNA and the ds-ssDNA junction are located. The ThM domain is wedged between the ssDNA tails, with the 5' ssDNA contacting Bax1 and the 3' ssDNA in a channel in XPB2. Bax1 increases the affinity of XPB2 for forked DNA. The sequence is that of DNA 3'-5' translocase XPB2 from Sulfurisphaera tokodaii (strain DSM 16993 / JCM 10545 / NBRC 100140 / 7) (Sulfolobus tokodaii).